A 472-amino-acid polypeptide reads, in one-letter code: L-aspartate oxidase (472 aa).

FAD-binding positions include 7–10, 36–43, and Asp-190; these read SGLA and SSYWAKGG. The active-site Proton donor/acceptor is the Arg-256. FAD contacts are provided by residues Glu-332 and 348-349; that span reads SL.

This sequence belongs to the FAD-dependent oxidoreductase 2 family. NadB subfamily. FAD serves as cofactor.

The protein localises to the cytoplasm. It catalyses the reaction L-aspartate + O2 = iminosuccinate + H2O2. Its pathway is cofactor biosynthesis; NAD(+) biosynthesis; iminoaspartate from L-aspartate (oxidase route): step 1/1. Its function is as follows. Catalyzes the oxidation of L-aspartate to iminoaspartate, the first step in the de novo biosynthesis of NAD(+). The protein is L-aspartate oxidase (nadB) of Saccharolobus solfataricus (strain ATCC 35092 / DSM 1617 / JCM 11322 / P2) (Sulfolobus solfataricus).